A 597-amino-acid chain; its full sequence is Probable translation initiation factor IF-2 (597 aa).

Residues 10–226 enclose the tr-type G domain; sequence LRTPIVAVLG…LMGLSQRFMK (217 aa). A G1 region spans residues 19–26; it reads GHVDHGKT. 19 to 26 serves as a coordination point for GTP; it reads GHVDHGKT. The tract at residues 44–48 is G2; it reads AITQH. The G3 stretch occupies residues 81–84; it reads DTPG. GTP contacts are provided by residues 81–85 and 135–138; these read DTPGH and NKVD. Residues 135 to 138 are G4; the sequence is NKVD. The tract at residues 203-205 is G5; it reads SAI.

Belongs to the TRAFAC class translation factor GTPase superfamily. Classic translation factor GTPase family. IF-2 subfamily.

Function in general translation initiation by promoting the binding of the formylmethionine-tRNA to ribosomes. Seems to function along with eIF-2. In Halorubrum lacusprofundi (strain ATCC 49239 / DSM 5036 / JCM 8891 / ACAM 34), this protein is Probable translation initiation factor IF-2.